The primary structure comprises 165 residues: Large ribosomal subunit protein uL10 (165 aa).

Belongs to the universal ribosomal protein uL10 family. Part of the ribosomal stalk of the 50S ribosomal subunit. The N-terminus interacts with L11 and the large rRNA to form the base of the stalk. The C-terminus forms an elongated spine to which L12 dimers bind in a sequential fashion forming a multimeric L10(L12)X complex.

Functionally, forms part of the ribosomal stalk, playing a central role in the interaction of the ribosome with GTP-bound translation factors. The sequence is that of Large ribosomal subunit protein uL10 from Pectobacterium atrosepticum (strain SCRI 1043 / ATCC BAA-672) (Erwinia carotovora subsp. atroseptica).